Here is a 212-residue protein sequence, read N- to C-terminus: ER lumen protein-retaining receptor 1 (212 aa).

Over 1–4 the chain is Lumenal; that stretch reads MNLF. Residues 5–24 traverse the membrane as a helical segment; it reads RFLGDLSHLLAIILLLLKIW. The Cytoplasmic portion of the chain corresponds to 25-32; that stretch reads KSRSCAGI. A helical transmembrane segment spans residues 33 to 52; that stretch reads SGKSQVLFAVVFTARYLDLF. Positions 47–48 are interaction with the K-D-E-L motif on target proteins; it reads RY. The Lumenal segment spans residues 53–58; that stretch reads TNYISL. Residues 59–79 form a helical membrane-spanning segment; that stretch reads YNTCMKVVYIACSFTTVWMIY. The Cytoplasmic segment spans residues 80-92; it reads SKFKATYDGNHDT. The chain crosses the membrane as a helical span at residues 93 to 110; the sequence is FRVEFLVVPTAVLAFLVN. Residues 111 to 116 lie on the Lumenal side of the membrane; sequence HDFTPL. Residues 117 to 135 traverse the membrane as a helical segment; sequence EILWTFSIYLESVAILPQL. Over 136-149 the chain is Cytoplasmic; sequence FMVSKTGEAETITS. Residues 150-168 traverse the membrane as a helical segment; it reads HYLFALGVYRTLYLFNWIW. An interaction with the K-D-E-L motif on target proteins region spans residues 159-169; it reads RTLYLFNWIWR. Topologically, residues 169–178 are lumenal; it reads RYHFEGFFDL. The chain crosses the membrane as a helical span at residues 179–199; it reads IAIVAGLVQTVLYCDFFYLYI. Over 200-212 the chain is Cytoplasmic; it reads TKVLKGKKLSLPA. Residues 204-207 form an important for recycling of cargo proteins with the sequence motif K-D-E-L from the Golgi to the endoplasmic reticulum region; that stretch reads KGKK. Position 209 is a phosphoserine; by PKA (S209).

The protein belongs to the ERD2 family. Upon ligand binding the receptor oligomerizes and interacts with components of the transport machinery such as ARFGAP1 and ARF1. Phosphorylation by PKA at Ser-209 is required for endoplasmic reticulum retention function.

The protein resides in the golgi apparatus membrane. The protein localises to the cytoplasmic vesicle. It is found in the COPI-coated vesicle membrane. It localises to the endoplasmic reticulum membrane. Its subcellular location is the endoplasmic reticulum-Golgi intermediate compartment membrane. Its function is as follows. Receptor for the C-terminal sequence motif K-D-E-L that is present on endoplasmic reticulum resident proteins and that mediates their recycling from the Golgi back to the endoplasmic reticulum. The chain is ER lumen protein-retaining receptor 1 (Kdelr1) from Rattus norvegicus (Rat).